A 69-amino-acid polypeptide reads, in one-letter code: UPF0337 protein ECA0631 (69 aa).

It belongs to the UPF0337 (CsbD) family.

The protein is UPF0337 protein ECA0631 of Pectobacterium atrosepticum (strain SCRI 1043 / ATCC BAA-672) (Erwinia carotovora subsp. atroseptica).